Reading from the N-terminus, the 337-residue chain is Glyceraldehyde-3-phosphate dehydrogenase (337 aa).

Residues 11-12 (TV), 34-35 (TR), and glycine 110 contribute to the NADP(+) site. D-glyceraldehyde 3-phosphate is bound at residue 139–141 (SCN). Cysteine 140 serves as the catalytic Nucleophile. NADP(+) is bound at residue aspartate 171. 194 to 195 (HG) provides a ligand contact to D-glyceraldehyde 3-phosphate. Glutamine 300 contributes to the NADP(+) binding site.

This sequence belongs to the glyceraldehyde-3-phosphate dehydrogenase family. Homotetramer.

It is found in the cytoplasm. It catalyses the reaction D-glyceraldehyde 3-phosphate + phosphate + NADP(+) = (2R)-3-phospho-glyceroyl phosphate + NADPH + H(+). The catalysed reaction is D-glyceraldehyde 3-phosphate + phosphate + NAD(+) = (2R)-3-phospho-glyceroyl phosphate + NADH + H(+). It participates in carbohydrate degradation; glycolysis; pyruvate from D-glyceraldehyde 3-phosphate: step 1/5. Functionally, exhibits a dual-cofactor specificity, with a marked preference for NADP(+) over NAD(+). The chain is Glyceraldehyde-3-phosphate dehydrogenase (gap) from Methanothermus fervidus.